Reading from the N-terminus, the 772-residue chain is Probable adenosine deaminase (772 aa).

Positions 22 and 24 each coordinate Zn(2+). Positions 24, 26, and 180 each coordinate substrate. His207 is a binding site for Zn(2+). Residue Glu210 is the Proton donor of the active site. Position 288 (Asp288) interacts with Zn(2+).

Belongs to the metallo-dependent hydrolases superfamily. Adenosine and AMP deaminases family. Zn(2+) serves as cofactor.

It catalyses the reaction adenosine + H2O + H(+) = inosine + NH4(+). Functionally, catalyzes the hydrolytic deamination of adenosine. Plays an important role in purine metabolism and in adenosine homeostasis, and may thereby contribute to cellular signaling events. The sequence is that of Probable adenosine deaminase (ada) from Dictyostelium discoideum (Social amoeba).